We begin with the raw amino-acid sequence, 76 residues long: Centromere protein W (76 aa).

This sequence belongs to the CENP-W/WIP1 family. As to quaternary structure, heterodimer with CENPT; this dimer coassembles with CENPS-CENPX heterodimers at centromeres to form the tetrameric CENP-T-W-S-X complex, which is a subcomplex of the large constitutive centromere-associated network (CCAN, also known as the interphase centromere complex or ICEN). Interacts with NPM1.

It is found in the nucleus. The protein localises to the chromosome. The protein resides in the centromere. Its subcellular location is the kinetochore. Component of the CENPA-NAC (nucleosome-associated) complex, a complex that plays a central role in assembly of kinetochore proteins, mitotic progression and chromosome segregation. The CENPA-NAC complex recruits the CENPA-CAD (nucleosome distal) complex and may be involved in incorporation of newly synthesized CENPA into centromeres. Part of a nucleosome-associated complex that binds specifically to histone H3-containing nucleosomes at the centromere, as opposed to nucleosomes containing CENPA. Component of the heterotetrameric CENP-T-W-S-X complex that binds and supercoils DNA, and plays an important role in kinetochore assembly. CENPW has a fundamental role in kinetochore assembly and function. It is one of the inner kinetochore proteins, with most further proteins binding downstream. Required for normal chromosome organization and normal progress through mitosis. This chain is Centromere protein W (CENPW), found in Gallus gallus (Chicken).